Consider the following 821-residue polypeptide: MPTVISPTVAPRTGAEPRSPGPVPHPAQGKTTEAGGGHPGGIYSAIISRNFPIIGVKEKTFEQLHKKCLEKKVLYLDPEFPPDETSLFYSQKFPIQFVWKRPPEICENPRFIIGGANRTDICQGDLGDCWLLAAIACLTLNERLLFRVIPHDQSFTENYAGIFHFQFWRYGDWVDVVIDDCLPTYNNQLVFTKSNHRNEFWSALLEKAYAKLHGSYEALKGGNTTEAMEDFTGGVTEFFEIKDAPSDMYKIMRKAIERGSLMGCSIDDGTNMTYGTSPSGLNMGELIARMVRNMDNSLLRDSDLDPRASDDRPSRTIVPVQYETRMACGLVKGHAYSVTGLEEALFKGEKVKLVRLRNPWGQVEWNGSWSDGWKDWSFVDKDEKARLQHQVTEDGEFWMSYDDFVYHFTKLEICNLTADALESDKLQTWTVSVNEGRWVRGCSAGGCRNFPDTFWTNPQYRLKLLEEDDDPDDSEVICSFLVALMQKNRRKDRKLGANLFTIGFAIYEVPKEMHGNKQHLQKDFFLYNASKARSKTYINMREVSQRFRLPPSEYVIVPSTYEPHQEGEFILRVFSEKRNLSEEAENTISVDRPVKKKKNKPIIFVSDRANSNKELGVDQEAEEGKDKTGPDKQGESPQPRPGHTDQESEEQQQFRNIFRQIAGDDMEICADELKNVLNTVVNKHKDLKTQGFTLESCRSMIALMDTDGSGRLNLQEFHHLWKKIKAWQKIFKHYDTDHSGTINSYEMRNAVNDAGFHLNSQLYDIITMRYADKHMNIDFDSFICCFVRLEGMFRAFHAFDKDGDGIIKLNVLEWLQLTMYA.

A disordered region spans residues 1–37 (MPTVISPTVAPRTGAEPRSPGPVPHPAQGKTTEAGGG). The Calpain catalytic domain occupies 74–417 (LYLDPEFPPD…FTKLEICNLT (344 aa)). Active-site residues include Cys-129, His-334, and Asn-358. Positions 418–586 (ADALESDKLQ…KRNLSEEAEN (169 aa)) are domain III. The interval 587–649 (TISVDRPVKK…RPGHTDQESE (63 aa)) is linker. Residues 603–651 (IFVSDRANSNKELGVDQEAEEGKDKTGPDKQGESPQPRPGHTDQESEEQ) are disordered. Basic and acidic residues predominate over residues 622–634 (EEGKDKTGPDKQG). 4 consecutive EF-hand domains span residues 649–683 (EEQQQFRNIFRQIAGDDMEICADELKNVLNTVVNK), 692–725 (FTLESCRSMIALMDTDGSGRLNLQEFHHLWKKIK), 722–757 (KKIKAWQKIFKHYDTDHSGTINSYEMRNAVNDAGFH), and 787–821 (VRLEGMFRAFHAFDKDGDGIIKLNVLEWLQLTMYA). The segment at 650 to 820 (EQQQFRNIFR…VLEWLQLTMY (171 aa)) is domain IV. Ca(2+) is bound by residues Ala-662, Asp-665, Glu-667, Glu-672, Asp-705, Asp-707, Ser-709, Arg-711, Glu-716, Asp-735, Asp-737, Ser-739, Thr-741, Glu-746, Asp-800, Asp-802, Asp-804, and Ile-806.

It belongs to the peptidase C2 family. As to quaternary structure, homodimer; via EF-hand domain 4. Interacts with TTN/titin. Interacts with CMYA5; this interaction, which results in CMYA5 proteolysis, may protect CAPN3 from autolysis. Interacts with SIMC1. Interacts with UTP25; the interaction is required for CAPN3 translocation to the nucleolus. In terms of tissue distribution, skeletal muscle.

It is found in the cytoplasm. The protein resides in the nucleus. The protein localises to the nucleolus. The catalysed reaction is Broad endopeptidase activity.. Its activity is regulated as follows. Activated by micromolar concentrations of calcium and inhibited by calpastatin. Functionally, calcium-regulated non-lysosomal thiol-protease. Proteolytically cleaves CTBP1 at 'His-399'. Mediates, with UTP25, the proteasome-independent degradation of p53/TP53. In Rattus norvegicus (Rat), this protein is Calpain-3 (Capn3).